A 213-amino-acid chain; its full sequence is tRNA (guanine-N(7)-)-methyltransferase (213 aa).

Positions 44, 69, 96, and 118 each coordinate S-adenosyl-L-methionine. Asp-118 is an active-site residue. Substrate contacts are provided by residues Lys-122, Asp-154, and 192-195 (TEYE).

The protein belongs to the class I-like SAM-binding methyltransferase superfamily. TrmB family.

It catalyses the reaction guanosine(46) in tRNA + S-adenosyl-L-methionine = N(7)-methylguanosine(46) in tRNA + S-adenosyl-L-homocysteine. It functions in the pathway tRNA modification; N(7)-methylguanine-tRNA biosynthesis. Catalyzes the formation of N(7)-methylguanine at position 46 (m7G46) in tRNA. This Limosilactobacillus reuteri (strain DSM 20016) (Lactobacillus reuteri) protein is tRNA (guanine-N(7)-)-methyltransferase.